Consider the following 335-residue polypeptide: UPF0353 protein BCG_1543 (335 aa).

Transmembrane regions (helical) follow at residues W18 to L38 and V67 to T87. In terms of domain architecture, VWFA spans V98 to L294. A helical membrane pass occupies residues V309–I329.

It belongs to the UPF0353 family.

The protein resides in the cell membrane. The sequence is that of UPF0353 protein BCG_1543 from Mycobacterium bovis (strain BCG / Pasteur 1173P2).